Reading from the N-terminus, the 778-residue chain is Dolichyl-phosphate-mannose--protein mannosyltransferase 4 (778 aa).

Residues 1-28 are compositionally biased toward basic and acidic residues; it reads MASKSEKAVKKAQKLSKEPSVELTDTKS. The disordered stretch occupies residues 1 to 44; that stretch reads MASKSEKAVKKAQKLSKEPSVELTDTKSSDNVTPKQKSPNSTEE. A compositionally biased stretch (polar residues) spans 29–41; that stretch reads SDNVTPKQKSPNS. N40 carries an N-linked (GlcNAc...) asparagine glycan. The next 7 helical transmembrane spans lie at 60–80, 103–123, 145–165, 196–216, 223–243, 248–268, and 288–308; these read LAFVLITVLSFITRFWNLNLP, FFDLHPPFAKLLLALVAKLAG, VTIRAWPALLSSLVPPVVFLI, ILLDATLLFSMVCAIYCYVRF, PFSRPWWAWLFFTGFFLSCTI, VGFFTFLSIGLSVCLELWYLW, and FCLIFFPFLFFLFWFYMHFNI. N-linked (GlcNAc...) asparagine glycosylation occurs at N335. 3 MIR domains span residues 336-396, 408-467, and 474-529; these read STIL…ILPA, NVPV…VVMS, and RPLY…FDDI. 4 consecutive transmembrane segments (helical) span residues 608-628, 644-664, 669-689, and 726-746; these read WWIIAGTVLSTTVVAAAEILL, FYRSTMFFYMTYVFHYLPFFI, LFLHHYLPAHLAGSLLVGAFI, and VIELICTLLLIFVVIYCFTFF.

The protein belongs to the glycosyltransferase 39 family.

It is found in the endoplasmic reticulum membrane. The enzyme catalyses a di-trans,poly-cis-dolichyl beta-D-mannosyl phosphate + L-seryl-[protein] = 3-O-(alpha-D-mannosyl)-L-seryl-[protein] + a di-trans,poly-cis-dolichyl phosphate + H(+). It catalyses the reaction a di-trans,poly-cis-dolichyl beta-D-mannosyl phosphate + L-threonyl-[protein] = 3-O-(alpha-D-mannosyl)-L-threonyl-[protein] + a di-trans,poly-cis-dolichyl phosphate + H(+). Its pathway is protein modification; protein glycosylation. In terms of biological role, transfers mannose from Dol-P-mannose to Ser or Thr residues on proteins. Required for normal cell wall and septum formation. The sequence is that of Dolichyl-phosphate-mannose--protein mannosyltransferase 4 (ogm4) from Schizosaccharomyces pombe (strain 972 / ATCC 24843) (Fission yeast).